The sequence spans 465 residues: Cysteine--tRNA ligase (465 aa).

Cys27 contributes to the Zn(2+) binding site. A 'HIGH' region motif is present at residues 29–39 (PTVYDDAHLGH). Positions 207, 237, and 241 each coordinate Zn(2+). The 'KMSKS' region signature appears at 269–273 (KMSKS). Residue Lys272 participates in ATP binding.

Belongs to the class-I aminoacyl-tRNA synthetase family. Monomer. Zn(2+) serves as cofactor.

The protein localises to the cytoplasm. It carries out the reaction tRNA(Cys) + L-cysteine + ATP = L-cysteinyl-tRNA(Cys) + AMP + diphosphate. This Nitratiruptor sp. (strain SB155-2) protein is Cysteine--tRNA ligase.